We begin with the raw amino-acid sequence, 444 residues long: Multidrug resistance protein MdtA (444 aa).

A signal peptide spans 1-20 (MKSQSKRTSRLFVFVGVVVA). Positions 37–52 (NNTSGAQQSARGQDTS) are enriched in polar residues. Disordered stretches follow at residues 37-60 (NNTSGAQQSARGQDTSHGGRRNTP) and 398-444 (TPRS…AEKS). The segment covering 406–419 (ANPASAEKAAAEAE) has biased composition (low complexity). Residues 435–444 (ARSTTAAEKS) are compositionally biased toward polar residues.

This sequence belongs to the membrane fusion protein (MFP) (TC 8.A.1) family. In terms of assembly, part of a tripartite efflux system composed of MdtA, MdtB and MdtC.

Its subcellular location is the cell inner membrane. This chain is Multidrug resistance protein MdtA, found in Yersinia pestis bv. Antiqua (strain Antiqua).